The following is a 161-amino-acid chain: SsrA-binding protein (161 aa).

Belongs to the SmpB family.

It localises to the cytoplasm. Functionally, required for rescue of stalled ribosomes mediated by trans-translation. Binds to transfer-messenger RNA (tmRNA), required for stable association of tmRNA with ribosomes. tmRNA and SmpB together mimic tRNA shape, replacing the anticodon stem-loop with SmpB. tmRNA is encoded by the ssrA gene; the 2 termini fold to resemble tRNA(Ala) and it encodes a 'tag peptide', a short internal open reading frame. During trans-translation Ala-aminoacylated tmRNA acts like a tRNA, entering the A-site of stalled ribosomes, displacing the stalled mRNA. The ribosome then switches to translate the ORF on the tmRNA; the nascent peptide is terminated with the 'tag peptide' encoded by the tmRNA and targeted for degradation. The ribosome is freed to recommence translation, which seems to be the essential function of trans-translation. The chain is SsrA-binding protein from Haemophilus influenzae (strain 86-028NP).